We begin with the raw amino-acid sequence, 349 residues long: Serine/threonine-protein kinase SRK2A (349 aa).

Residues 12 to 268 (YELVKDIGSG…IQEIKNHEWF (257 aa)) form the Protein kinase domain. ATP is bound by residues 18 to 26 (IGSGNFGVA) and K41. D131 acts as the Proton acceptor in catalysis. The tract at residues 151-177 (DFGYSKSSLLHSQPKSTVGTPAYIAPE) is activation loop.

This sequence belongs to the protein kinase superfamily. Ser/Thr protein kinase family.

The catalysed reaction is L-seryl-[protein] + ATP = O-phospho-L-seryl-[protein] + ADP + H(+). The enzyme catalyses L-threonyl-[protein] + ATP = O-phospho-L-threonyl-[protein] + ADP + H(+). Its activity is regulated as follows. Activated by osmotic stress and by abscisic acid (ABA). Activation by NaCl is dependent on ABA. Involved in early responses to osmotic stress. The sequence is that of Serine/threonine-protein kinase SRK2A from Physcomitrium patens (Spreading-leaved earth moss).